The primary structure comprises 174 residues: MLTLIQGKKIVNDLRSRLAFEYNGQLIKILSKNIVAVGSLRREEKMLNDVDLLIIVPEKKLLKHVLPNIRIKDFSFSIKVCGERKCVLFIEWKKNTYQLDLFTALAEEKPYAVLHFTGPVSYLIRIRAALKKKNYKLNQYGLFKNQTLVPLKITTEKELIKELGFTYRIPKKRL.

An involved in ssDNA binding region spans residues 42–51; the sequence is REEKMLNDVD. Positions 49 and 51 each coordinate Mg(2+). A disulfide bridge connects residues cysteine 81 and cysteine 86. Aspartate 100 lines the Mg(2+) pocket.

This sequence belongs to the DNA polymerase type-X family. Mg(2+) is required as a cofactor.

The protein resides in the virion. The catalysed reaction is DNA(n) + a 2'-deoxyribonucleoside 5'-triphosphate = DNA(n+1) + diphosphate. Its function is as follows. Error-prone polymerase lacking a proofreading 3'-5' exonuclease which catalyzes the gap-filling reaction during the DNA repair process. Specifically binds intermediates in the single-nucleotide base-excision repair process. Also catalyzes DNA polymerization with low nucleotide-insertion fidelity. Probably acts as a strategic DNA mutase, which gives rise to a rapid emergence of variants. Generates mismatched G-G pairs, in that case, the polymerase first binds the deoxynucleotide followed by mismatch formation. Together with the viral DNA ligase, fills the single nucleotide gaps generated by the AP endonuclease. Binds DNA with high affinity via the helix alphaE. The protein is Repair DNA polymerase X of Ornithodoros (relapsing fever ticks).